Consider the following 56-residue polypeptide: Large ribosomal subunit protein bL33 (56 aa).

The protein belongs to the bacterial ribosomal protein bL33 family.

In Anaplasma marginale (strain Florida), this protein is Large ribosomal subunit protein bL33.